The chain runs to 608 residues: Coilin (608 aa).

Residues 134 to 272 (KETGGYESES…RKKAKRQWLR (139 aa)) are disordered. Acidic residues predominate over residues 141 to 155 (SESEEDELEEEAEEF). Positions 161–179 (ASKKRKTSSKNQSTKRKKC) are enriched in basic residues. Positions 163–170 (KKRKTSSK) match the Nuclear localization signal 1 motif. Serine 187 carries the post-translational modification Phosphoserine. The span at 211 to 228 (DVQSANNDEQNNDSTKPM) shows a compositional bias: polar residues. Positions 235–245 (SQQEESKEHND) are enriched in basic and acidic residues. Residues 253-260 (TKKTPSRS) carry the Nuclear localization signal 2 motif. A compositionally biased stretch (basic residues) spans 256-269 (TPSRSARRKKAKRQ). Positions 410-510 (YEQLVAYTGS…LLDVRSVKTS (101 aa)) constitute a Tudor; atypical domain. The tract at residues 513–585 (DSAEVAKSAL…KKGSSSGGSW (73 aa)) is disordered. Over residues 558 to 585 (EALSAKKAALSQANNGWNKKGSSSGGSW) the composition is skewed to low complexity.

It belongs to the coilin family. As to quaternary structure, homooligomer. Interaction with RNA results in multimerization due to structural alteration in the NOD domain.

Its subcellular location is the nucleus. The protein resides in the cajal body. Probable component of nuclear coiled bodies, also known as Cajal bodies or CBs, which are involved in the modification and assembly of nucleoplasmic snRNPs. Required for CBs formation. Binds snRNAs and non-specific artificial RNA via the N-terminal part of the NOD domain and via the NLS2 region (212-282) of the IDD domain. The two sites are able to function independently and provide effective RNA-binding in a non-cooperative manner. This chain is Coilin, found in Arabidopsis thaliana (Mouse-ear cress).